The following is a 473-amino-acid chain: Photosystem II CP43 reaction center protein (473 aa).

Residues 1 to 14 (MKTLYSLRRFYPVE) constitute a propeptide that is removed on maturation. Threonine 15 is subject to N-acetylthreonine. A Phosphothreonine modification is found at threonine 15. The next 5 helical transmembrane spans lie at 69–93 (LFEV…PHLA), 134–155 (LLGP…KDRN), 178–200 (KALY…RKIT), 255–275 (KPFA…LSYS), and 291–312 (WFNN…ASQA). Position 367 (glutamate 367) interacts with [CaMn4O5] cluster. The helical transmembrane segment at 447–471 (RARAAAAGFEKGIDRDFEPVLSMTP) threads the bilayer.

Belongs to the PsbB/PsbC family. PsbC subfamily. PSII is composed of 1 copy each of membrane proteins PsbA, PsbB, PsbC, PsbD, PsbE, PsbF, PsbH, PsbI, PsbJ, PsbK, PsbL, PsbM, PsbT, PsbX, PsbY, PsbZ, Psb30/Ycf12, at least 3 peripheral proteins of the oxygen-evolving complex and a large number of cofactors. It forms dimeric complexes. The cofactor is Binds multiple chlorophylls and provides some of the ligands for the Ca-4Mn-5O cluster of the oxygen-evolving complex. It may also provide a ligand for a Cl- that is required for oxygen evolution. PSII binds additional chlorophylls, carotenoids and specific lipids..

It localises to the plastid. The protein localises to the chloroplast thylakoid membrane. One of the components of the core complex of photosystem II (PSII). It binds chlorophyll and helps catalyze the primary light-induced photochemical processes of PSII. PSII is a light-driven water:plastoquinone oxidoreductase, using light energy to abstract electrons from H(2)O, generating O(2) and a proton gradient subsequently used for ATP formation. This is Photosystem II CP43 reaction center protein from Piper cenocladum (Ant piper).